The primary structure comprises 562 residues: NAD-dependent malic enzyme (562 aa).

Tyrosine 101 acts as the Proton donor in catalysis. Arginine 154 is a binding site for NAD(+). Lysine 172 (proton acceptor) is an active-site residue. A divalent metal cation-binding residues include glutamate 243, aspartate 244, and aspartate 267. Positions 267 and 415 each coordinate NAD(+).

Belongs to the malic enzymes family. As to quaternary structure, homotetramer. Requires Mg(2+) as cofactor. Mn(2+) is required as a cofactor.

It carries out the reaction (S)-malate + NAD(+) = pyruvate + CO2 + NADH. The enzyme catalyses oxaloacetate + H(+) = pyruvate + CO2. This chain is NAD-dependent malic enzyme, found in Shewanella piezotolerans (strain WP3 / JCM 13877).